The following is a 448-amino-acid chain: Histidinol dehydrogenase (448 aa).

Residues Tyr136, Gln197, and Asn220 each contribute to the NAD(+) site. 3 residues coordinate substrate: Ser243, Gln265, and His268. Zn(2+) contacts are provided by Gln265 and His268. Catalysis depends on proton acceptor residues Glu333 and His334. Positions 334, 367, 421, and 426 each coordinate substrate. Asp367 lines the Zn(2+) pocket. Residue His426 participates in Zn(2+) binding.

It belongs to the histidinol dehydrogenase family. It depends on Zn(2+) as a cofactor.

It catalyses the reaction L-histidinol + 2 NAD(+) + H2O = L-histidine + 2 NADH + 3 H(+). It functions in the pathway amino-acid biosynthesis; L-histidine biosynthesis; L-histidine from 5-phospho-alpha-D-ribose 1-diphosphate: step 9/9. Catalyzes the sequential NAD-dependent oxidations of L-histidinol to L-histidinaldehyde and then to L-histidine. This chain is Histidinol dehydrogenase, found in Pseudomonas syringae pv. tomato (strain ATCC BAA-871 / DC3000).